A 508-amino-acid chain; its full sequence is Photosystem II CP47 reaction center protein (508 aa).

A run of 6 helical transmembrane segments spans residues 21–36 (SVHIMHTALVAGWAGS), 101–115 (IVFSGLCFLAAIWHW), 140–156 (GIHLFLSGVACFGFGAF), 203–218 (IAAGTLGILAGLFHLS), 237–252 (VLSSSIAAVFFAAFVV), and 457–472 (SFALLFFFGHIWHGSR).

This sequence belongs to the PsbB/PsbC family. PsbB subfamily. In terms of assembly, PSII is composed of 1 copy each of membrane proteins PsbA, PsbB, PsbC, PsbD, PsbE, PsbF, PsbH, PsbI, PsbJ, PsbK, PsbL, PsbM, PsbT, PsbX, PsbY, PsbZ, Psb30/Ycf12, at least 3 peripheral proteins of the oxygen-evolving complex and a large number of cofactors. It forms dimeric complexes. It depends on Binds multiple chlorophylls. PSII binds additional chlorophylls, carotenoids and specific lipids. as a cofactor.

It is found in the plastid. Its subcellular location is the chloroplast thylakoid membrane. Its function is as follows. One of the components of the core complex of photosystem II (PSII). It binds chlorophyll and helps catalyze the primary light-induced photochemical processes of PSII. PSII is a light-driven water:plastoquinone oxidoreductase, using light energy to abstract electrons from H(2)O, generating O(2) and a proton gradient subsequently used for ATP formation. In Capsella bursa-pastoris (Shepherd's purse), this protein is Photosystem II CP47 reaction center protein.